A 405-amino-acid chain; its full sequence is Argininosuccinate synthase (405 aa).

ATP-binding positions include 10-18 (AYSGGLDTS) and Ala37. 2 residues coordinate L-citrulline: Tyr88 and Ser93. Gly118 provides a ligand contact to ATP. Thr120, Asn124, and Asp125 together coordinate L-aspartate. Asn124 lines the L-citrulline pocket. 5 residues coordinate L-citrulline: Arg128, Ser179, Ser188, Glu264, and Tyr276.

This sequence belongs to the argininosuccinate synthase family. Type 1 subfamily. As to quaternary structure, homotetramer.

It localises to the cytoplasm. It carries out the reaction L-citrulline + L-aspartate + ATP = 2-(N(omega)-L-arginino)succinate + AMP + diphosphate + H(+). It participates in amino-acid biosynthesis; L-arginine biosynthesis; L-arginine from L-ornithine and carbamoyl phosphate: step 2/3. The chain is Argininosuccinate synthase from Pseudomonas fluorescens (strain Pf0-1).